The following is a 142-amino-acid chain: Hemoglobin subunit zeta (142 aa).

An N-acetylserine modification is found at serine 2. In terms of domain architecture, Globin spans 2-142 (SLMKNERAII…LSSILTEKYR (141 aa)). The residue at position 29 (threonine 29) is a Phosphothreonine. Residue serine 53 is modified to Phosphoserine. Histidine 59 contacts heme b. Serine 73 is subject to Phosphoserine. Histidine 88 serves as a coordination point for heme b.

This sequence belongs to the globin family. In terms of assembly, heterotetramer of two zeta chains and beta-type chains.

Its function is as follows. The zeta chain is an alpha-type chain of mammalian embryonic hemoglobin. The protein is Hemoglobin subunit zeta (Hbz) of Mus musculus (Mouse).